Here is a 44-residue protein sequence, read N- to C-terminus: Large ribosomal subunit protein bL34 (44 aa).

The disordered stretch occupies residues 1-26 (MQRTLGGTNRKRKRTSGFRARMRTPD). Over residues 9-22 (NRKRKRTSGFRARM) the composition is skewed to basic residues.

This sequence belongs to the bacterial ribosomal protein bL34 family.

The protein is Large ribosomal subunit protein bL34 of Trichormus variabilis (strain ATCC 29413 / PCC 7937) (Anabaena variabilis).